The chain runs to 502 residues: ATP synthase subunit beta (502 aa).

ATP is bound at residue 156–163 (GGAGVGKT).

Belongs to the ATPase alpha/beta chains family. F-type ATPases have 2 components, CF(1) - the catalytic core - and CF(0) - the membrane proton channel. CF(1) has five subunits: alpha(3), beta(3), gamma(1), delta(1), epsilon(1). CF(0) has three main subunits: a(1), b(2) and c(9-12). The alpha and beta chains form an alternating ring which encloses part of the gamma chain. CF(1) is attached to CF(0) by a central stalk formed by the gamma and epsilon chains, while a peripheral stalk is formed by the delta and b chains.

It localises to the cell membrane. It carries out the reaction ATP + H2O + 4 H(+)(in) = ADP + phosphate + 5 H(+)(out). In terms of biological role, produces ATP from ADP in the presence of a proton gradient across the membrane. The catalytic sites are hosted primarily by the beta subunits. The chain is ATP synthase subunit beta from Cellulophaga lytica (Cytophaga lytica).